The following is a 487-amino-acid chain: Fatty acid desaturase 2-like protein FADS2B (487 aa).

Residues 1 to 11 are compositionally biased toward basic and acidic residues; that stretch reads MKLEEKLEHNE. Residues 1 to 20 form a disordered region; that stretch reads MKLEEKLEHNESLVGKSRPC. At 1–175 the chain is on the cytoplasmic side; the sequence is MKLEEKLEHN…AMNMFSANLR (175 aa). One can recognise a Cytochrome b5 heme-binding domain in the interval 62–139; sequence LNLYTWQEIQ…LKPLLIGELS (78 aa). Heme-binding residues include H97 and H120. The chain crosses the membrane as a helical span at residues 176 to 196; sequence FFFLHLAQILILEISAWLILH. The Lumenal segment spans residues 197 to 201; that stretch reads HFGSS. Residues 202–222 traverse the membrane as a helical segment; that stretch reads WLVTILISFLLTVSQAQCSFL. Topologically, residues 223-307 are cytoplasmic; sequence QHDLGHLSMF…IKYIDYEKQH (85 aa). The Histidine box-1 motif lies at 224 to 228; that stretch reads HDLGH. A Histidine box-2 motif is present at residues 261–265; that stretch reads HFQHH. Residues 308-328 traverse the membrane as a helical segment; sequence LYFYMVALPFLMPVYFNLQSM. The Lumenal portion of the chain corresponds to 329–349; sequence QVMYLRKYWMDIAWVSSFYIR. Residues 350 to 370 form a helical membrane-spanning segment; that stretch reads YFITFGPFYGIFGTVLLIYLV. Over 371-487 the chain is Cytoplasmic; that stretch reads KFIESPWIAY…ASLWMNAYYE (117 aa). The Histidine box-3 motif lies at 426 to 430; sequence QIEHH.

It belongs to the fatty acid desaturase type 1 family.

The protein resides in the endoplasmic reticulum membrane. The protein operates within lipid metabolism; polyunsaturated fatty acid biosynthesis. The polypeptide is Fatty acid desaturase 2-like protein FADS2B (Mus musculus (Mouse)).